Here is a 503-residue protein sequence, read N- to C-terminus: Sarpagan bridge enzyme 1 (503 aa).

Residues 3-23 (ISVTTSIALATIVFFLYKLAT) traverse the membrane as a helical; Signal-anchor for type II membrane protein segment. Cys-442 contacts heme.

The protein belongs to the cytochrome P450 family. Heme serves as cofactor. Highly expressed in roots. Expressed at low levels in leaves, stems and flowers.

The protein localises to the endoplasmic reticulum membrane. The enzyme catalyses (19E)-geissoschizine + reduced [NADPH--hemoprotein reductase] + O2 = polyneuridine aldehyde + oxidized [NADPH--hemoprotein reductase] + 2 H2O + H(+). It carries out the reaction tetrahydroalstonine + A + reduced [NADPH--hemoprotein reductase] + O2 = alstonine + AH2 + oxidized [NADPH--hemoprotein reductase] + 2 H2O + H(+). It catalyses the reaction ajmalicine + A + reduced [NADPH--hemoprotein reductase] + O2 = serpentine + AH2 + oxidized [NADPH--hemoprotein reductase] + 2 H2O + H(+). Its pathway is alkaloid biosynthesis; ajmaline biosynthesis. In terms of biological role, monooxygenase involved in the biosynthesis of ajmaline-type monoterpenoid indole alkaloids (MIAs) natural products, important plant-derived pharmaceuticals used in the therapy of heart disorders. Converts by cyclization the strictosidine-derived geissoschizine to the sarpagan alkaloid polyneuridine aldehyde, precursor of vomilenine, an intermediate chemical in the biosynthesis of ajmaline. Converts by aromatization the tetrahydro-beta-carboline alkaloids tetrahydroalstonine and ajmalicine to the corresponding beta-carboline alkaloids alstonine and serpentine, respectively. The chain is Sarpagan bridge enzyme 1 from Rauvolfia serpentina (Serpentine wood).